The sequence spans 220 residues: MVKSTSKTSTKETVTKQPTEEKPIQEKEELALETSSSSSDEEDEKDEDEIEGLAASDDEQSGTHKIKRLNPKKQANEKKSKDKKTLEEYSGIIYVSRLPHGFHEKELSKYFAQFGDLKEVRLARNKKTGNSRHYGFLEFVNKEDAMIAQESMNNYLLMGHLLQVRVLPKGAKIEKLYKYKKRVLVEKGITKPVKQLKDNMKQKHEERIKKLAKSGIEFKW.

The interval 1–82 is disordered; the sequence is MVKSTSKTST…KQANEKKSKD (82 aa). Residues 9-30 show a composition bias toward basic and acidic residues; the sequence is STKETVTKQPTEEKPIQEKEEL. Acidic residues predominate over residues 39-60; that stretch reads SDEEDEKDEDEIEGLAASDDEQ. One can recognise an RRM domain in the interval 91–169; sequence GIIYVSRLPH…HLLQVRVLPK (79 aa).

As to quaternary structure, component of the pre-66S ribosomal particle. Interacts with NOP7 and RRP1.

The protein resides in the cytoplasm. It is found in the nucleus. It localises to the nucleolus. Involved in the biogenesis of the 60S ribosomal subunit. Required for pre-rRNA processing and cytokinesis. Associates with the precursors of the 25S and 5.8S rRNAs. This chain is Ribosome biogenesis protein 15, found in Saccharomyces cerevisiae (strain ATCC 204508 / S288c) (Baker's yeast).